The primary structure comprises 456 residues: Protein trichome birefringence-like 25 (456 aa).

The chain crosses the membrane as a helical; Signal-anchor for type II membrane protein span at residues 26–42 (QIFLKSVAFFLLIGLAY). The GDS motif motif lies at 172–174 (GDS). A DCXHWCLPGXXDXWN motif motif is present at residues 426-440 (DCLHWCLPGPIDSWN).

Belongs to the PC-esterase family. TBL subfamily.

Its subcellular location is the membrane. May be involved in the O-acetylation of mannan. May act as a bridging protein that binds pectin and other cell wall polysaccharides. Probably involved in maintaining esterification of pectins. In Arabidopsis thaliana (Mouse-ear cress), this protein is Protein trichome birefringence-like 25 (TBL25).